The sequence spans 378 residues: Protein RecA (378 aa).

Residue 79–86 (GPESSGKT) coordinates ATP.

The protein belongs to the RecA family.

It localises to the cytoplasm. Functionally, can catalyze the hydrolysis of ATP in the presence of single-stranded DNA, the ATP-dependent uptake of single-stranded DNA by duplex DNA, and the ATP-dependent hybridization of homologous single-stranded DNAs. It interacts with LexA causing its activation and leading to its autocatalytic cleavage. The chain is Protein RecA from Streptococcus pyogenes serotype M28 (strain MGAS6180).